The sequence spans 460 residues: tRNA-2-methylthio-N(6)-dimethylallyladenosine synthase (460 aa).

The MTTase N-terminal domain maps to Gly10–Ser126. [4Fe-4S] cluster contacts are provided by Cys19, Cys55, Cys89, Cys161, Cys165, and Cys168. The region spanning Arg147–Glu384 is the Radical SAM core domain. The TRAM domain maps to Ala387–Pro455.

The protein belongs to the methylthiotransferase family. MiaB subfamily. Monomer. The cofactor is [4Fe-4S] cluster.

The protein resides in the cytoplasm. The catalysed reaction is N(6)-dimethylallyladenosine(37) in tRNA + (sulfur carrier)-SH + AH2 + 2 S-adenosyl-L-methionine = 2-methylsulfanyl-N(6)-dimethylallyladenosine(37) in tRNA + (sulfur carrier)-H + 5'-deoxyadenosine + L-methionine + A + S-adenosyl-L-homocysteine + 2 H(+). In terms of biological role, catalyzes the methylthiolation of N6-(dimethylallyl)adenosine (i(6)A), leading to the formation of 2-methylthio-N6-(dimethylallyl)adenosine (ms(2)i(6)A) at position 37 in tRNAs that read codons beginning with uridine. The sequence is that of tRNA-2-methylthio-N(6)-dimethylallyladenosine synthase from Parasynechococcus marenigrum (strain WH8102).